The primary structure comprises 118 residues: Ribosome-binding factor A (118 aa).

It belongs to the RbfA family. As to quaternary structure, monomer. Binds 30S ribosomal subunits, but not 50S ribosomal subunits or 70S ribosomes.

Its subcellular location is the cytoplasm. One of several proteins that assist in the late maturation steps of the functional core of the 30S ribosomal subunit. Associates with free 30S ribosomal subunits (but not with 30S subunits that are part of 70S ribosomes or polysomes). Required for efficient processing of 16S rRNA. May interact with the 5'-terminal helix region of 16S rRNA. In Shouchella clausii (strain KSM-K16) (Alkalihalobacillus clausii), this protein is Ribosome-binding factor A.